The primary structure comprises 852 residues: G-type lectin S-receptor-like serine/threonine-protein kinase At4g03230 (852 aa).

Residues 1–19 (MILSVFFYMFLLHIRRLDC) form the signal peptide. The Bulb-type lectin domain occupies 20-154 (FVAVQDSKTL…GNEANVVWQS (135 aa)). Topologically, residues 20 to 444 (FVAVQDSKTL…RGRGRYGEAK (425 aa)) are extracellular. 6 N-linked (GlcNAc...) asparagine glycosylation sites follow: Asn-37, Asn-59, Asn-171, Asn-187, Asn-234, and Asn-243. One can recognise an EGF-like domain in the interval 285 to 321 (PRDECSVYNACGNFGSCNSKNEEMCKCLPGFRPNFLE). 2 disulfide bridges follow: Cys-289–Cys-301 and Cys-295–Cys-309. The PAN domain occupies 339–426 (CGKDGVVVGD…SRNVFIRVAV (88 aa)). The N-linked (GlcNAc...) asparagine glycan is linked to Asn-352. 2 disulfide bridges follow: Cys-373-Cys-400 and Cys-377-Cys-383. A helical transmembrane segment spans residues 445–465 (TPVVLIIVVTFTSAAILVVLS). Over 466–852 (STASYVFLQR…ELTITLEDGR (387 aa)) the chain is Cytoplasmic. The Protein kinase domain maps to 532-819 (FSNANKLGQG…TLPTPKQPAF (288 aa)). ATP contacts are provided by residues 538–546 (LGQGGFGPV) and Lys-560. The residue at position 566 (Ser-566) is a Phosphoserine. Residues 621-638 (KLCQRLDWKMRCNIILGI) are caM-binding. Residue Asp-657 is the Proton acceptor of the active site. Ser-661 and Ser-674 each carry phosphoserine. Thr-691 carries the post-translational modification Phosphothreonine. A disordered region spans residues 826–852 (SSSKASSSTKPETCSENELTITLEDGR). Phosphoserine is present on residues Ser-831 and Ser-840. The segment covering 834-845 (TKPETCSENELT) has biased composition (polar residues). Position 847 is a phosphothreonine (Thr-847).

This sequence belongs to the protein kinase superfamily. Ser/Thr protein kinase family.

It localises to the cell membrane. The enzyme catalyses L-seryl-[protein] + ATP = O-phospho-L-seryl-[protein] + ADP + H(+). It catalyses the reaction L-threonyl-[protein] + ATP = O-phospho-L-threonyl-[protein] + ADP + H(+). The sequence is that of G-type lectin S-receptor-like serine/threonine-protein kinase At4g03230 from Arabidopsis thaliana (Mouse-ear cress).